A 420-amino-acid polypeptide reads, in one-letter code: ATP phosphoribosyltransferase regulatory subunit (420 aa).

Belongs to the class-II aminoacyl-tRNA synthetase family. HisZ subfamily. Heteromultimer composed of HisG and HisZ subunits.

The protein resides in the cytoplasm. It participates in amino-acid biosynthesis; L-histidine biosynthesis; L-histidine from 5-phospho-alpha-D-ribose 1-diphosphate: step 1/9. Required for the first step of histidine biosynthesis. May allow the feedback regulation of ATP phosphoribosyltransferase activity by histidine. This is ATP phosphoribosyltransferase regulatory subunit from Bacillus cereus (strain ATCC 10987 / NRS 248).